Reading from the N-terminus, the 259-residue chain is Imidazole glycerol phosphate synthase subunit HisF (259 aa).

Active-site residues include D11 and D130.

Belongs to the HisA/HisF family. Heterodimer of HisH and HisF.

It is found in the cytoplasm. The catalysed reaction is 5-[(5-phospho-1-deoxy-D-ribulos-1-ylimino)methylamino]-1-(5-phospho-beta-D-ribosyl)imidazole-4-carboxamide + L-glutamine = D-erythro-1-(imidazol-4-yl)glycerol 3-phosphate + 5-amino-1-(5-phospho-beta-D-ribosyl)imidazole-4-carboxamide + L-glutamate + H(+). It functions in the pathway amino-acid biosynthesis; L-histidine biosynthesis; L-histidine from 5-phospho-alpha-D-ribose 1-diphosphate: step 5/9. Its function is as follows. IGPS catalyzes the conversion of PRFAR and glutamine to IGP, AICAR and glutamate. The HisF subunit catalyzes the cyclization activity that produces IGP and AICAR from PRFAR using the ammonia provided by the HisH subunit. This is Imidazole glycerol phosphate synthase subunit HisF from Shewanella amazonensis (strain ATCC BAA-1098 / SB2B).